Here is a 162-residue protein sequence, read N- to C-terminus: Caveolin-2 (162 aa).

At 1-86 the chain is on the cytoplasmic side; sequence MGLETEKADV…FEISKYVMYK (86 aa). Tyr-19 carries the phosphotyrosine; by SRC modification. 2 positions are modified to phosphoserine: Ser-20 and Ser-23. Tyr-27 carries the post-translational modification Phosphotyrosine; by SRC. Residue Ser-36 is modified to Phosphoserine. An intramembrane region (helical) is located at residues 87-107; that stretch reads FLTVFLAIPLAFLAGILFATL. Over 108–162 the chain is Cytoplasmic; sequence SCLHIWIIMPFVKTCLMVLPSVQTIWKSVTDAIIAPLCTSIGRSFSSVSLQLSQD.

This sequence belongs to the caveolin family. Monomer or homodimer. Interacts with CAV1; the interaction forms a stable heterooligomeric complex that is required for targeting to lipid rafts and for caveolae formation. Tyrosine phosphorylated forms do not form heterooligomers with the Tyr-19-phosphorylated form existing as a monomer or dimer, and the Tyr-27-form as a monomer only. Interacts (tyrosine phosphorylated form) with the SH2 domain-containing proteins, RASA1, NCK1 and SRC. Interacts (tyrosine phosphorylated form) with INSR, the interaction (Tyr-27-phosphorylated form) is increased on insulin stimulation. Interacts (Tyr-19 phosphorylated form) with MAPK1 (phosphorylated form); the interaction, promoted by insulin, leads to nuclear location and MAPK1 activation. Interacts with STAT3; the interaction is increased on insulin-induced tyrosine phosphorylation leading to STAT activation. Post-translationally, phosphorylated on serine and tyrosine residues. CAV1 promotes phosphorylation on Ser-23 which then targets the complex to the plasma membrane, lipid rafts and caveolae. Phosphorylation on Ser-36 appears to modulate mitosis in endothelial cells. Phosphorylation on both Tyr-19 and Tyr-27 is required for insulin-induced 'Ser-727' phosphorylation of STAT3 and its activation. Phosphorylation on Tyr-19 is required for insulin-induced phosphorylation of MAPK1 and DNA binding of STAT3. Tyrosine phosphorylation is induced by both EGF and insulin (By. similarity).

The protein resides in the nucleus. It is found in the cytoplasm. The protein localises to the golgi apparatus membrane. It localises to the cell membrane. Its subcellular location is the membrane. The protein resides in the caveola. May act as a scaffolding protein within caveolar membranes. Interacts directly with G-protein alpha subunits and can functionally regulate their activity. Acts as an accessory protein in conjunction with CAV1 in targeting to lipid rafts and driving caveolae formation. The Ser-36 phosphorylated form has a role in modulating mitosis in endothelial cells. Positive regulator of cellular mitogenesis of the MAPK signaling pathway. Required for the insulin-stimulated nuclear translocation and activation of MAPK1 and STAT3, and the subsequent regulation of cell cycle progression. This is Caveolin-2 (CAV2) from Plecturocebus moloch (Dusky titi monkey).